The following is a 237-amino-acid chain: Phosphoribosylaminoimidazole-succinocarboxamide synthase (237 aa).

It belongs to the SAICAR synthetase family.

The enzyme catalyses 5-amino-1-(5-phospho-D-ribosyl)imidazole-4-carboxylate + L-aspartate + ATP = (2S)-2-[5-amino-1-(5-phospho-beta-D-ribosyl)imidazole-4-carboxamido]succinate + ADP + phosphate + 2 H(+). Its pathway is purine metabolism; IMP biosynthesis via de novo pathway; 5-amino-1-(5-phospho-D-ribosyl)imidazole-4-carboxamide from 5-amino-1-(5-phospho-D-ribosyl)imidazole-4-carboxylate: step 1/2. This Baumannia cicadellinicola subsp. Homalodisca coagulata protein is Phosphoribosylaminoimidazole-succinocarboxamide synthase.